Reading from the N-terminus, the 257-residue chain is Phosphatidylglycerol--prolipoprotein diacylglyceryl transferase (257 aa).

4 helical membrane-spanning segments follow: residues 12-32 (FSIR…VYLA), 49-69 (FILM…VIFE), 83-103 (IWNG…LLVI), and 109-129 (LINP…AQAI). R131 is a binding site for a 1,2-diacyl-sn-glycero-3-phospho-(1'-sn-glycerol). Transmembrane regions (helical) follow at residues 167–187 (VPTF…IMSI), 197–217 (GEVA…IEGM), and 226–246 (GLRV…VMII).

The protein belongs to the Lgt family.

The protein resides in the cell membrane. It catalyses the reaction L-cysteinyl-[prolipoprotein] + a 1,2-diacyl-sn-glycero-3-phospho-(1'-sn-glycerol) = an S-1,2-diacyl-sn-glyceryl-L-cysteinyl-[prolipoprotein] + sn-glycerol 1-phosphate + H(+). The protein operates within protein modification; lipoprotein biosynthesis (diacylglyceryl transfer). Its function is as follows. Catalyzes the transfer of the diacylglyceryl group from phosphatidylglycerol to the sulfhydryl group of the N-terminal cysteine of a prolipoprotein, the first step in the formation of mature lipoproteins. The polypeptide is Phosphatidylglycerol--prolipoprotein diacylglyceryl transferase (Streptococcus agalactiae serotype Ia (strain ATCC 27591 / A909 / CDC SS700)).